A 132-amino-acid chain; its full sequence is Large ribosomal subunit protein bL12 (132 aa).

A compositionally biased stretch (basic and acidic residues) spans 100–126 (ESTPKPVKEGASKEDAEAAKKELEEAG). The segment at 100-132 (ESTPKPVKEGASKEDAEAAKKELEEAGAKVSIK) is disordered.

It belongs to the bacterial ribosomal protein bL12 family. In terms of assembly, homodimer. Part of the ribosomal stalk of the 50S ribosomal subunit. Forms a multimeric L10(L12)X complex, where L10 forms an elongated spine to which 2 to 4 L12 dimers bind in a sequential fashion. Binds GTP-bound translation factors.

Forms part of the ribosomal stalk which helps the ribosome interact with GTP-bound translation factors. Is thus essential for accurate translation. This Thermosynechococcus vestitus (strain NIES-2133 / IAM M-273 / BP-1) protein is Large ribosomal subunit protein bL12.